The primary structure comprises 152 residues: MGNIVYFSSVSENTHRFVEKLELPATRIPILGRIQDPDFVREPYVLVLPTYGGGHANGPDPDAGGYVPKQVIAFLNNEHNRSLIRGVIAAGNTNFGAEFGYAGDVVSRKCGVPYLYRFELMGTTDDVLAVRAGLENFWKEQTCHPPSQLQSL.

This sequence belongs to the NrdI family.

Functionally, probably involved in ribonucleotide reductase function. This is Protein NrdI from Mycobacterium sp. (strain JLS).